The following is a 204-amino-acid chain: Small ribosomal subunit protein uS7 (204 aa).

This sequence belongs to the universal ribosomal protein uS7 family. Part of the 30S ribosomal subunit.

Functionally, one of the primary rRNA binding proteins, it binds directly to 16S rRNA where it nucleates assembly of the head domain of the 30S subunit. Is located at the subunit interface close to the decoding center. The protein is Small ribosomal subunit protein uS7 of Methanoregula boonei (strain DSM 21154 / JCM 14090 / 6A8).